A 461-amino-acid polypeptide reads, in one-letter code: Argininosuccinate lyase (461 aa).

This sequence belongs to the lyase 1 family. Argininosuccinate lyase subfamily.

It is found in the cytoplasm. It carries out the reaction 2-(N(omega)-L-arginino)succinate = fumarate + L-arginine. The protein operates within amino-acid biosynthesis; L-arginine biosynthesis; L-arginine from L-ornithine and carbamoyl phosphate: step 3/3. This Dehalococcoides mccartyi (strain CBDB1) protein is Argininosuccinate lyase.